Here is a 152-residue protein sequence, read N- to C-terminus: 3-hydroxyacyl-[acyl-carrier-protein] dehydratase FabZ (152 aa).

His-58 is a catalytic residue.

This sequence belongs to the thioester dehydratase family. FabZ subfamily.

It is found in the cytoplasm. It catalyses the reaction a (3R)-hydroxyacyl-[ACP] = a (2E)-enoyl-[ACP] + H2O. Involved in unsaturated fatty acids biosynthesis. Catalyzes the dehydration of short chain beta-hydroxyacyl-ACPs and long chain saturated and unsaturated beta-hydroxyacyl-ACPs. The sequence is that of 3-hydroxyacyl-[acyl-carrier-protein] dehydratase FabZ from Prochlorococcus marinus subsp. pastoris (strain CCMP1986 / NIES-2087 / MED4).